Here is a 281-residue protein sequence, read N- to C-terminus: Diaminopimelate epimerase (281 aa).

Substrate contacts are provided by N14 and N65. The active-site Proton donor is C74. Substrate contacts are provided by residues 75-76, N165, N198, and 216-217; these read GN and ER. C225 functions as the Proton acceptor in the catalytic mechanism. 226 to 227 serves as a coordination point for substrate; sequence GT.

It belongs to the diaminopimelate epimerase family. Homodimer.

It localises to the cytoplasm. The catalysed reaction is (2S,6S)-2,6-diaminopimelate = meso-2,6-diaminopimelate. Its pathway is amino-acid biosynthesis; L-lysine biosynthesis via DAP pathway; DL-2,6-diaminopimelate from LL-2,6-diaminopimelate: step 1/1. In terms of biological role, catalyzes the stereoinversion of LL-2,6-diaminopimelate (L,L-DAP) to meso-diaminopimelate (meso-DAP), a precursor of L-lysine and an essential component of the bacterial peptidoglycan. In Leptospira interrogans serogroup Icterohaemorrhagiae serovar copenhageni (strain Fiocruz L1-130), this protein is Diaminopimelate epimerase.